The sequence spans 328 residues: Biotin synthase (328 aa).

The Radical SAM core domain maps to 41–260 (TAIETASLLS…VALARILMPA (220 aa)). [4Fe-4S] cluster-binding residues include Cys-56, Cys-60, and Cys-63. [2Fe-2S] cluster-binding residues include Cys-100, Cys-131, Cys-191, and Arg-264.

It belongs to the radical SAM superfamily. Biotin synthase family. In terms of assembly, homodimer. [4Fe-4S] cluster is required as a cofactor. Requires [2Fe-2S] cluster as cofactor.

The enzyme catalyses (4R,5S)-dethiobiotin + (sulfur carrier)-SH + 2 reduced [2Fe-2S]-[ferredoxin] + 2 S-adenosyl-L-methionine = (sulfur carrier)-H + biotin + 2 5'-deoxyadenosine + 2 L-methionine + 2 oxidized [2Fe-2S]-[ferredoxin]. It functions in the pathway cofactor biosynthesis; biotin biosynthesis; biotin from 7,8-diaminononanoate: step 2/2. Functionally, catalyzes the conversion of dethiobiotin (DTB) to biotin by the insertion of a sulfur atom into dethiobiotin via a radical-based mechanism. This is Biotin synthase from Cereibacter sphaeroides (strain ATCC 17029 / ATH 2.4.9) (Rhodobacter sphaeroides).